A 218-amino-acid polypeptide reads, in one-letter code: Ependymin (218 aa).

A signal peptide spans 1–20; that stretch reads MHTVKLLCVVFSCLCAVAWG. 2 N-linked (GlcNAc...) asparagine glycosylation sites follow: N74 and N97.

The protein belongs to the ependymin family. Forms disulfide-linked dimers. In terms of processing, binds calcium through the terminal sialic acids.

The protein localises to the secreted. Functionally, may play a role in neural plasticity. May be involved during axon regeneration. The protein is Ependymin (epd) of Devario aequipinnatus (Giant danio).